The sequence spans 398 residues: Mitochondrial protein import protein mas5 (398 aa).

One can recognise a J domain in the interval 7–88 (GYYKVLELSP…KKKKEYDSGM (82 aa)). The CR-type zinc-finger motif lies at 139–219 (GKVSKFNVRT…CNGAEYIQDK (81 aa)). 144–146 (FNV) is a binding site for substrate. The Zn(2+) site is built by Cys-152, Cys-155, Cys-166, Cys-169, Cys-192, Cys-195, Cys-207, and Cys-210. CXXCXGXG motif repeat units follow at residues 152–159 (CTTCDGKG), 166–173 (CKKCNGNG), 192–199 (CDGCDGSG), and 207–214 (CSTCNGAE). Substrate contacts are provided by residues 221–222 (MF) and 253–255 (VIF). The interval 367–386 (FGSMPEPERDHEDASEEGAQ) is disordered.

This sequence belongs to the DnaJ family. Homodimer. Requires Zn(2+) as cofactor.

Its subcellular location is the cytoplasm. Its function is as follows. Probably involved in mitosomal protein import. The sequence is that of Mitochondrial protein import protein mas5 (MAS5) from Encephalitozoon cuniculi (strain GB-M1) (Microsporidian parasite).